We begin with the raw amino-acid sequence, 443 residues long: MSTTPNIGFISLGCPKNLVDSERILTELRTDGYNIIPSYENADLVIVNTCGFIDSAVQESLEAIGEALEENGKVIVTGCLGAKENQIREVHPKVLEITGPHSYEAVMKHVHKYVPRPERNIYTSLVPAQGVKLTPKHYAYLKISEGCDHRCTFCIIPSMRGDLDSRPIVQVLDEAKRLADSGVKELLIVSQDTSAYALDQSKENQNKTVFWNGAPIKNNLITLCEQLGSLGIWVRLHYVYPYPHVDDLIPLMAQGKILPYLDIPLQHASPKVLKAMKRPGAIDRTLERIKKWREICPELTLRSTFIVGFPGETEEDFQMLLDFLEEAQLDRVGCFKFSPVEGAVATEMADQVSEDVKEERFHRFMQVQQRISAARLQQKVGKTLAVIIDEIDEEGIIGRSMADAPEIDGVVYVDNLSEQEVKVGQVISVSITNADEYDLWGTC.

In terms of domain architecture, MTTase N-terminal spans 5–115 (PNIGFISLGC…VMKHVHKYVP (111 aa)). Residues Cys14, Cys50, Cys79, Cys147, Cys151, and Cys154 each contribute to the [4Fe-4S] cluster site. The 242-residue stretch at 133–374 (LTPKHYAYLK…MQVQQRISAA (242 aa)) folds into the Radical SAM core domain. A TRAM domain is found at 377–443 (QQKVGKTLAV…ADEYDLWGTC (67 aa)).

This sequence belongs to the methylthiotransferase family. RimO subfamily. [4Fe-4S] cluster serves as cofactor.

Its subcellular location is the cytoplasm. The catalysed reaction is L-aspartate(89)-[ribosomal protein uS12]-hydrogen + (sulfur carrier)-SH + AH2 + 2 S-adenosyl-L-methionine = 3-methylsulfanyl-L-aspartate(89)-[ribosomal protein uS12]-hydrogen + (sulfur carrier)-H + 5'-deoxyadenosine + L-methionine + A + S-adenosyl-L-homocysteine + 2 H(+). In terms of biological role, catalyzes the methylthiolation of an aspartic acid residue of ribosomal protein uS12. This chain is Ribosomal protein uS12 methylthiotransferase RimO, found in Actinobacillus pleuropneumoniae serotype 7 (strain AP76).